A 679-amino-acid polypeptide reads, in one-letter code: Tripartite terminase subunit 1 (679 aa).

The C3H1-type zinc finger occupies 180–208; that stretch reads CIYCLNEHMMLPNQGESLPSLMMCVNCKH.

Belongs to the herpesviridae TRM1 protein family. In terms of assembly, associates with TRM2 and TRM3 to form the tripartite terminase complex. Interacts with portal protein.

It localises to the host nucleus. Functionally, component of the molecular motor that translocates viral genomic DNA in empty capsid during DNA packaging. Forms a tripartite terminase complex together with TRM2 and TRM3 in the host cytoplasm. Once the complex reaches the host nucleus, it interacts with the capsid portal vertex. This portal forms a ring in which genomic DNA is translocated into the capsid. TRM1 carries an endonuclease activity that plays an important role for the cleavage of concatemeric viral DNA into unit length genomes. This chain is Tripartite terminase subunit 1, found in Saimiriine herpesvirus 2 (strain 11) (SaHV-2).